Consider the following 323-residue polypeptide: tRNA dimethylallyltransferase (323 aa).

13–20 provides a ligand contact to ATP; it reads GPTASGKT. Residue 15–20 coordinates substrate; that stretch reads TASGKT. Interaction with substrate tRNA regions lie at residues 42-45, 166-170, 251-256, and 284-291; these read DSAL, QRIQR, RCVGYR, and KRQITWLR.

Belongs to the IPP transferase family. In terms of assembly, monomer. Mg(2+) is required as a cofactor.

The catalysed reaction is adenosine(37) in tRNA + dimethylallyl diphosphate = N(6)-dimethylallyladenosine(37) in tRNA + diphosphate. Its function is as follows. Catalyzes the transfer of a dimethylallyl group onto the adenine at position 37 in tRNAs that read codons beginning with uridine, leading to the formation of N6-(dimethylallyl)adenosine (i(6)A). The chain is tRNA dimethylallyltransferase from Acidovorax sp. (strain JS42).